We begin with the raw amino-acid sequence, 121 residues long: Large ribosomal subunit protein bL12 (121 aa).

This sequence belongs to the bacterial ribosomal protein bL12 family. In terms of assembly, homodimer. Part of the ribosomal stalk of the 50S ribosomal subunit. Forms a multimeric L10(L12)X complex, where L10 forms an elongated spine to which 2 to 4 L12 dimers bind in a sequential fashion. Binds GTP-bound translation factors.

Forms part of the ribosomal stalk which helps the ribosome interact with GTP-bound translation factors. Is thus essential for accurate translation. The polypeptide is Large ribosomal subunit protein bL12 (Pseudomonas fluorescens (strain ATCC BAA-477 / NRRL B-23932 / Pf-5)).